A 285-amino-acid chain; its full sequence is Protein pxr1 (285 aa).

Residues 1–11 are compositionally biased toward basic residues; the sequence is MGLAAPRKKIK. The interval 1 to 23 is disordered; sequence MGLAAPRKKIKISHDPNNTNWSR. A G-patch domain is found at 25-79; that stretch reads TSGFGHKILSSQGWTPGSFLGARNAAHAEMFTAASASHIKVVLKDDTLGLGARPK. The interval 144-263 is disordered; it reads TPIVTEEPQG…MGRHVFRGRH (120 aa). Residues 152–163 are compositionally biased toward basic and acidic residues; sequence QGIHKDKQEDKL. Residues 190–208 are compositionally biased toward basic residues; that stretch reads KKKKSKSKNHREKKDRKRK. The span at 224–234 shows a compositional bias: basic and acidic residues; that stretch reads RSTEKKSKATR. A compositionally biased stretch (basic residues) spans 254–263; it reads MGRHVFRGRH.

Belongs to the PINX1 family.

It localises to the nucleus. The protein resides in the nucleolus. Functionally, involved in rRNA-processing at A0, A1 and A2 sites and negatively regulates telomerase. This is Protein pxr1 (pxr1) from Aspergillus niger (strain ATCC MYA-4892 / CBS 513.88 / FGSC A1513).